The sequence spans 154 residues: uncharacterized protein (154 aa).

Disordered regions lie at residues 23 to 63 and 79 to 154; these read ERVG…VVLK and IKAA…DENE. Residues 43–56 are compositionally biased toward acidic residues; sequence PDEDGDHSDKEDEQ. The residue at position 50 (serine 50) is a Phosphoserine. At lysine 108 the chain carries N6-acetyllysine. A Phosphoserine modification is found at serine 146.

This is an uncharacterized protein from Homo sapiens (Human).